The chain runs to 20 residues: Basic phospholipase A2 cannitoxin alpha chain (20 aa).

Heterotrimer of alpha, beta, and gamma chains; non-covalently linked. Ca(2+) serves as cofactor. Expressed by the venom gland.

It localises to the secreted. The catalysed reaction is a 1,2-diacyl-sn-glycero-3-phosphocholine + H2O = a 1-acyl-sn-glycero-3-phosphocholine + a fatty acid + H(+). In terms of biological role, heterotrimer: Snake venom phospholipase A2 (PLA2) heterotrimer that acts as a potent presynaptic neurotoxin by blocking synaptic transmission and synaptic vesicle recycling. Enzymatic activity is essential for the neurotoxic effects. May act by binding in a calcium-dependent fashion to neurotonal pentraxin-1 (NPTX1) and neurotonal pentraxin-2 (NPTX2), but not to neuronal pentraxin receptor (NPTXR). Also binds to taipoxin-associated calcium binding protein 49 (RCN2), a protein localized in the lumen of endoplasmic reticulum. Functionally, monomer (alpha chain): Snake venom phospholipase A2 (PLA2) that possesses a low level of presynaptic activity and the same high enzymatic activity than the heterotrimer. PLA2 catalyzes the calcium-dependent hydrolysis of the 2-acyl groups in 3-sn-phosphoglycerides. The chain is Basic phospholipase A2 cannitoxin alpha chain from Oxyuranus scutellatus canni (Papuan taipan).